A 319-amino-acid polypeptide reads, in one-letter code: Beta-ketoacyl-[acyl-carrier-protein] synthase III (319 aa).

Residues cysteine 115 and histidine 246 contribute to the active site. The interval 247–251 (QANLR) is ACP-binding. Asparagine 276 is an active-site residue.

The protein belongs to the thiolase-like superfamily. FabH family. Homodimer.

Its subcellular location is the cytoplasm. It carries out the reaction malonyl-[ACP] + acetyl-CoA + H(+) = 3-oxobutanoyl-[ACP] + CO2 + CoA. It functions in the pathway lipid metabolism; fatty acid biosynthesis. Catalyzes the condensation reaction of fatty acid synthesis by the addition to an acyl acceptor of two carbons from malonyl-ACP. Catalyzes the first condensation reaction which initiates fatty acid synthesis and may therefore play a role in governing the total rate of fatty acid production. Possesses both acetoacetyl-ACP synthase and acetyl transacylase activities. Its substrate specificity determines the biosynthesis of branched-chain and/or straight-chain of fatty acids. In Coxiella burnetii (strain RSA 493 / Nine Mile phase I), this protein is Beta-ketoacyl-[acyl-carrier-protein] synthase III.